Reading from the N-terminus, the 445-residue chain is von Willebrand factor A domain-containing protein 1 (445 aa).

An N-terminal signal peptide occupies residues 1–22; that stretch reads MLPWTALGLALSLRLALARSGA. In terms of domain architecture, VWFA spans 34–213; it reads DLMFLLDSSA…ELRGSILDAM (180 aa). Residues S74 and S80 each carry the phosphoserine; by FAM20C modification. Y83 is subject to Phosphotyrosine. Position 93 is a phosphoserine; by FAM20C (S93). The 91-residue stretch at 214 to 304 folds into the Fibronectin type-III 1 domain; it reads RPQQLHATEI…QILRVRTRPG (91 aa). Residue N264 is glycosylated (N-linked (GlcNAc...) asparagine). Disordered regions lie at residues 302–325 and 411–445; these read RPGEAGPGASGPESGAGPAPTQLA and RESALSAKACTPDGPRPRPRPVPRAPTPGTASREP. Over residues 311–325 the composition is skewed to low complexity; sequence SGPESGAGPAPTQLA. The region spanning 334–427 is the Fibronectin type-III 2 domain; the sequence is GPERIVISHA…KACTPDGPRP (94 aa).

Homodimer or homomultimer; disulfide-linked. Interacts with HSPG2. N-glycosylated.

It is found in the secreted. The protein localises to the extracellular space. Its subcellular location is the extracellular matrix. It localises to the basement membrane. Functionally, promotes matrix assembly. Involved in the organization of skeletal muscles and in the formation of neuromuscular junctions. The chain is von Willebrand factor A domain-containing protein 1 from Homo sapiens (Human).